The primary structure comprises 246 residues: Probable transcriptional regulatory protein AHA_1522 (246 aa).

The protein belongs to the TACO1 family.

It localises to the cytoplasm. The protein is Probable transcriptional regulatory protein AHA_1522 of Aeromonas hydrophila subsp. hydrophila (strain ATCC 7966 / DSM 30187 / BCRC 13018 / CCUG 14551 / JCM 1027 / KCTC 2358 / NCIMB 9240 / NCTC 8049).